The primary structure comprises 20 residues: Toxin b subunit beta (20 aa).

As to quaternary structure, toxin b is a heterodimer composed of toxin alpha and toxin beta. As to expression, expressed by the venom gland.

Its subcellular location is the secreted. Binds to sodium channels (Nav) and affects the channel activation process. The protein is Toxin b subunit beta of Androctonus crassicauda (Arabian fat-tailed scorpion).